Here is a 219-residue protein sequence, read N- to C-terminus: Small ribosomal subunit protein uS5 (219 aa).

Polar residues predominate over residues 1-21 (MTDQNQKANQGNGLQTTNLQA). The disordered stretch occupies residues 1–61 (MTDQNQKANQ…NQNRRFQKPA (61 aa)). Basic and acidic residues predominate over residues 35–47 (GIKKAVSKKEGGG). The S5 DRBM domain maps to 66–129 (FEERIVKLKR…KAAHNSLHTI (64 aa)).

This sequence belongs to the universal ribosomal protein uS5 family. As to quaternary structure, part of the 30S ribosomal subunit. Contacts proteins S4 and S8.

Functionally, with S4 and S12 plays an important role in translational accuracy. Its function is as follows. Located at the back of the 30S subunit body where it stabilizes the conformation of the head with respect to the body. This chain is Small ribosomal subunit protein uS5, found in Mycoplasma pneumoniae (strain ATCC 29342 / M129 / Subtype 1) (Mycoplasmoides pneumoniae).